The sequence spans 616 residues: Chaperone protein HscA homolog (616 aa).

The protein belongs to the heat shock protein 70 family.

Functionally, chaperone involved in the maturation of iron-sulfur cluster-containing proteins. Has a low intrinsic ATPase activity which is markedly stimulated by HscB. This Histophilus somni (strain 129Pt) (Haemophilus somnus) protein is Chaperone protein HscA homolog.